The primary structure comprises 981 residues: Rab3 GTPase-activating protein catalytic subunit (981 aa).

Ser-83, Ser-379, Ser-537, Ser-579, Ser-581, and Ser-590 each carry phosphoserine. Positions 592 to 613 are disordered; it reads TEELKGNGQESGKKGGPKEMAN. A Phosphoserine modification is found at Ser-664. Thr-908 carries the phosphothreonine modification. Positions 908–937 are disordered; the sequence is TPPEEELKRMGSPEERRQNSVSDFPPPAGR. Residues 912–925 show a composition bias toward basic and acidic residues; sequence EELKRMGSPEERRQ.

Belongs to the Rab3-GAP catalytic subunit family. As to quaternary structure, the Rab3 GTPase-activating complex is a heterodimer composed of RAB3GAP1 and RAB3GAP2. The Rab3 GTPase-activating complex interacts with DMXL2. Interacts with LMAN1. Ubiquitous.

It localises to the cytoplasm. The protein localises to the endoplasmic reticulum. The protein resides in the golgi apparatus. It is found in the cis-Golgi network. In terms of biological role, catalytic subunit of the Rab3 GTPase-activating (Rab3GAP) complex composed of RAB3GAP1 and RAB3GAP2, which has GTPase-activating protein (GAP) activity towards various Rab3 subfamily members (RAB3A, RAB3B, RAB3C and RAB3D), RAB5A and RAB43, and guanine nucleotide exchange factor (GEF) activity towards RAB18. As part of the Rab3GAP complex, acts as a GAP for Rab3 proteins by converting active RAB3-GTP to the inactive form RAB3-GDP. Rab3 proteins are involved in regulated exocytosis of neurotransmitters and hormones. The Rab3GAP complex, acts as a GEF for RAB18 by promoting the conversion of inactive RAB18-GDP to the active form RAB18-GTP. Recruits and stabilizes RAB18 at the cis-Golgi membrane in fibroblasts where RAB18 is most likely activated. Also involved in RAB18 recruitment at the endoplasmic reticulum (ER) membrane where it maintains proper ER structure. Required for normal eye and brain development. May participate in neurodevelopmental processes such as proliferation, migration and differentiation before synapse formation, and non-synaptic vesicular release of neurotransmitters. This chain is Rab3 GTPase-activating protein catalytic subunit, found in Homo sapiens (Human).